A 141-amino-acid polypeptide reads, in one-letter code: Hemoglobin subunit alpha-D (141 aa).

A Globin domain is found at 1 to 141; the sequence is MLTADDKKLI…VAAVLAEKYR (141 aa). Positions 58 and 87 each coordinate heme b.

It belongs to the globin family. Heterotetramer of two alpha-D chains and two beta chains. Red blood cells.

In terms of biological role, involved in oxygen transport from the lung to the various peripheral tissues. This is Hemoglobin subunit alpha-D (HBAD) from Struthio camelus (Common ostrich).